The chain runs to 383 residues: Erythronate-4-phosphate dehydrogenase (383 aa).

2 residues coordinate substrate: Ser-45 and Thr-67. Asp-147 serves as a coordination point for NAD(+). Residue Arg-208 is part of the active site. Asp-232 is an NAD(+) binding site. The active site involves Glu-237. Residue His-254 is the Proton donor of the active site. Gly-257 contacts NAD(+). Tyr-258 lines the substrate pocket.

It belongs to the D-isomer specific 2-hydroxyacid dehydrogenase family. PdxB subfamily. As to quaternary structure, homodimer.

It localises to the cytoplasm. It catalyses the reaction 4-phospho-D-erythronate + NAD(+) = (R)-3-hydroxy-2-oxo-4-phosphooxybutanoate + NADH + H(+). Its pathway is cofactor biosynthesis; pyridoxine 5'-phosphate biosynthesis; pyridoxine 5'-phosphate from D-erythrose 4-phosphate: step 2/5. Functionally, catalyzes the oxidation of erythronate-4-phosphate to 3-hydroxy-2-oxo-4-phosphonooxybutanoate. This is Erythronate-4-phosphate dehydrogenase from Psychromonas ingrahamii (strain DSM 17664 / CCUG 51855 / 37).